The sequence spans 351 residues: Peptide chain release factor 1 (351 aa).

Position 229 is an N5-methylglutamine (Gln229).

This sequence belongs to the prokaryotic/mitochondrial release factor family. In terms of processing, methylated by PrmC. Methylation increases the termination efficiency of RF1.

Its subcellular location is the cytoplasm. In terms of biological role, peptide chain release factor 1 directs the termination of translation in response to the peptide chain termination codons UAG and UAA. This chain is Peptide chain release factor 1, found in Cereibacter sphaeroides (strain ATCC 17025 / ATH 2.4.3) (Rhodobacter sphaeroides).